Consider the following 660-residue polypeptide: V-type ATP synthase subunit I (660 aa).

7 helical membrane passes run 312–332 (FFAF…GLLF), 362–382 (ILGL…GMSF), 453–473 (FIDN…LSLG), 485–505 (IGWI…LGTV), 520–540 (GQIG…LAMI), 560–580 (VLSY…GATF), and 593–613 (SIVI…GGVI).

The protein belongs to the V-ATPase 116 kDa subunit family.

It localises to the cell membrane. Produces ATP from ADP in the presence of a proton gradient across the membrane. This Chlamydia pneumoniae (Chlamydophila pneumoniae) protein is V-type ATP synthase subunit I (atpI).